Here is a 77-residue protein sequence, read N- to C-terminus: Large ribosomal subunit protein bL28 (77 aa).

It belongs to the bacterial ribosomal protein bL28 family.

The protein is Large ribosomal subunit protein bL28 of Laribacter hongkongensis (strain HLHK9).